The primary structure comprises 372 residues: Cytochrome b (372 aa).

4 helical membrane-spanning segments follow: residues 32–52 (LGFN…CLSW), 77–99 (FIIR…IHII), 114–134 (VWFF…IGYT), and 180–200 (LHSI…AHFF). Heme b-binding residues include His83 and His97. Heme b contacts are provided by His184 and His198. His203 lines the a ubiquinone pocket. Transmembrane regions (helical) follow at residues 228–248 (YYLR…YYIC), 297–317 (LLFV…LIFI), 330–350 (LVLF…VLCF), and 351–371 (PLWM…VCRL).

Belongs to the cytochrome b family. As to quaternary structure, the main subunits of complex b-c1 are: cytochrome b, cytochrome c1 and the Rieske protein. It depends on heme b as a cofactor.

The protein resides in the mitochondrion inner membrane. Its function is as follows. Component of the ubiquinol-cytochrome c reductase complex (complex III or cytochrome b-c1 complex) that is part of the mitochondrial respiratory chain. The b-c1 complex mediates electron transfer from ubiquinol to cytochrome c. Contributes to the generation of a proton gradient across the mitochondrial membrane that is then used for ATP synthesis. This is Cytochrome b (MT-CYB) from Trypanoplasma borreli.